The chain runs to 388 residues: 2-epi-5-epi-valiolone synthase (388 aa).

Residues 92-95 (ERNK), 124-128 (GIVAD), 148-149 (TT), Lys161, Lys170, and 188-191 (LLAT) each bind NAD(+). Residues Glu203, His267, and His283 each coordinate Zn(2+).

This sequence belongs to the sugar phosphate cyclases superfamily. EEVS-like family. NAD(+) is required as a cofactor. The cofactor is Co(2+). Requires Zn(2+) as cofactor.

The catalysed reaction is D-sedoheptulose 7-phosphate = 2-epi-5-epi-valiolone + phosphate. Its function is as follows. Catalyzes the cyclization of D-sedoheptulose 7-phosphate to 2-epi-5-epi-valiolone. Probably involved in acarbose biosynthesis. This is 2-epi-5-epi-valiolone synthase from Streptomyces glaucescens.